Here is a 553-residue protein sequence, read N- to C-terminus: Transcription factor GAMYB (553 aa).

Over residues 1–17 the composition is skewed to basic and acidic residues; it reads MYRVKSESDCDMIHQEQ. The disordered stretch occupies residues 1 to 45; sequence MYRVKSESDCDMIHQEQMDSPVADDGSSGGSPHRGGGPPLKKGPW. Over residues 27–38 the composition is skewed to gly residues; that stretch reads SSGGSPHRGGGP. HTH myb-type domains follow at residues 37–89 and 90–144; these read GPPL…ANHL and RPNL…KRCQ. 2 consecutive DNA-binding regions (H-T-H motif) follow at residues 65-89 and 117-140; these read WNAV…ANHL and WARM…NTRI. The disordered stretch occupies residues 464 to 489; the sequence is PAQSTSMGSGEQVMGPKYEPGDTSPH.

Interacts with MYBS1. As to expression, expressed in aleurone cells, inflorescence shoot apical region, stamen primordia, and tapetum cells of the anther. Expressed at low level in roots and vegetative shoots.

The protein localises to the nucleus. Functionally, transcriptional activator of gibberellin-dependent alpha-amylase expression in aleurone cells. Involved in pollen and floral organs development. May bind to the 5'-TAACAAA-3' box of alpha-amylase promoter. Required for anther development. Functions in parallel with UDT1 to regulate early anther development. Functions upstream of the transcription factor TDR and may positively regulate its transcription. Required for pollen development. Probably required for controlling tapetal cell size and promoting tapetal programmed cell death (PCD) during anther development. Required for exine and Ubisch body formation in anthers. Interacts with the DNA specific motifs of giberrellin-up-regulated genes of anthers and regulates their expression. Positively regulates the expression of the laurate hydroxylase CYP703A3, known to be essential for the development of pollen exine and anther epicuticular layer. Functions with MYBS1 to integrate diverse nutrient starvation and gibberellin (GA) signaling pathways during germination of grains. Sugar, nitrogen and phosphate starvation signals converge and interconnect with GA to promote the co-nuclear import of GAMYB and MYBS1, resulting in the expression of a large set of GA-inducible hydrolases, transporters and regulators that are essential for mobilization of nutrient reserves in the endosperm to support seedling growth. This Oryza sativa subsp. japonica (Rice) protein is Transcription factor GAMYB.